A 531-amino-acid chain; its full sequence is Nuclear RNA export factor 3 (531 aa).

Disordered regions lie at residues 33–59 (RSEP…HGAH) and 83–106 (QDQT…GNMP). The span at 41 to 50 (MHSSSHQQQD) shows a compositional bias: polar residues. Over residues 83–102 (QDQTHVNMEREQKPPERRME) the composition is skewed to basic and acidic residues. One can recognise an RRM domain in the interval 113–192 (WFKITVPFGI…IFVNPAGIPH (80 aa)). The 151-residue stretch at 344–494 (LVLQFLQQYY…LCIVNDKLFV (151 aa)) folds into the NTF2 domain.

The protein belongs to the NXF family. Interacts with NXT1, NXT2, E1B-AP5 and CRM1 nuclear export factor. In terms of tissue distribution, expressed at high level in testis and at low level in a small number of tissues.

It is found in the nucleus. It localises to the cytoplasm. In terms of biological role, may function as a tissue-specific nuclear mRNA export factor. The protein is Nuclear RNA export factor 3 (NXF3) of Homo sapiens (Human).